The chain runs to 419 residues: tRNA modification GTPase MnmE (419 aa).

The (6S)-5-formyl-5,6,7,8-tetrahydrofolate site is built by Arg20, Glu76, and Arg115. A TrmE-type G domain is found at Gly211–Arg348. Residue Asn221 coordinates K(+). GTP-binding positions include Asn221–Thr226, Ser240–Thr246, and Asp265–Gly268. Ser225 provides a ligand contact to Mg(2+). K(+)-binding residues include Ser240, Ile242, and Thr245. Thr246 contacts Mg(2+). Lys419 serves as a coordination point for (6S)-5-formyl-5,6,7,8-tetrahydrofolate.

The protein belongs to the TRAFAC class TrmE-Era-EngA-EngB-Septin-like GTPase superfamily. TrmE GTPase family. Homodimer. Heterotetramer of two MnmE and two MnmG subunits. Requires K(+) as cofactor.

The protein localises to the cytoplasm. In terms of biological role, exhibits a very high intrinsic GTPase hydrolysis rate. Involved in the addition of a carboxymethylaminomethyl (cmnm) group at the wobble position (U34) of certain tRNAs, forming tRNA-cmnm(5)s(2)U34. The polypeptide is tRNA modification GTPase MnmE (Paracoccus denitrificans (strain Pd 1222)).